A 780-amino-acid polypeptide reads, in one-letter code: Dynamin-related protein 3B (780 aa).

N-acetylserine is present on S2. In terms of domain architecture, Dynamin-type G spans 40-315 (TIALPQVAVV…LVQHIKALLP (276 aa)). Positions 50 to 57 (GSQSSGKS) are G1 motif. A GTP-binding site is contributed by 50 to 57 (GSQSSGKS). The segment at 76 to 78 (CTR) is G2 motif. The interval 157–160 (DLPG) is G3 motif. GTP-binding positions include 157–161 (DLPGI) and 226–229 (TKLD). Positions 226-229 (TKLD) are G4 motif. Residues 256-259 (VNRS) form a G5 motif region. 2 disordered regions span residues 536–558 (PVARPRDTVEPERTASSGSQIKT) and 573–592 (QAVPTAADAERPAPAGSTSW). Basic and acidic residues predominate over residues 539 to 548 (RPRDTVEPER). The span at 549–558 (TASSGSQIKT) shows a compositional bias: polar residues. The GED domain occupies 654 to 745 (IEITKLLLKS…TLDELPLEAE (92 aa)). Over residues 753-770 (IGSEAKHEELPGTRRSRT) the composition is skewed to basic and acidic residues. A disordered region spans residues 753–780 (IGSEAKHEELPGTRRSRTETNGNGRLHM). Residues 771–780 (ETNGNGRLHM) show a composition bias toward polar residues.

The protein belongs to the TRAFAC class dynamin-like GTPase superfamily. Dynamin/Fzo/YdjA family. As to quaternary structure, interacts with ARC5 on peroxisomes and ELM1 on mitochondria.

The protein localises to the mitochondrion. Its subcellular location is the peroxisome. Functionally, involved in the control of mitochondrial and peroxisomal division and morphology. This chain is Dynamin-related protein 3B (DRP3B), found in Arabidopsis thaliana (Mouse-ear cress).